We begin with the raw amino-acid sequence, 346 residues long: PhoH-like protein (346 aa).

ATP is bound at residue 142 to 149; that stretch reads GPAGTGKT.

It belongs to the PhoH family.

The protein resides in the cytoplasm. The protein is PhoH-like protein (ybeZ) of Escherichia coli O157:H7.